Here is a 198-residue protein sequence, read N- to C-terminus: MSTLDELIQKARHLRSEGHSPGQIADELSLSMETVTWLLTQEKGAATPKDVHIDWTAVSGESQLLVESAQMLLSRLHLKNPEGPVPQVYVGIAISGIPLATLMAVTEGVRIGIYHPAKHAGGDEPIGSMSGNFDIHAGERIVVVDDVITSGKTLQEVINYIKRHGAVPVACCVLFDKRGIRDIDGVPVYSLFKVSRID.

It belongs to the purine/pyrimidine phosphoribosyltransferase family. GfcR subfamily.

This Methanospirillum hungatei JF-1 (strain ATCC 27890 / DSM 864 / NBRC 100397 / JF-1) protein is Transcriptional regulator GfcR.